Here is a 164-residue protein sequence, read N- to C-terminus: FMN reductase (NADH) RutF (164 aa).

Belongs to the non-flavoprotein flavin reductase family. RutF subfamily.

It carries out the reaction FMNH2 + NAD(+) = FMN + NADH + 2 H(+). Functionally, catalyzes the reduction of FMN to FMNH2 which is used to reduce pyrimidine by RutA via the Rut pathway. In Escherichia coli O127:H6 (strain E2348/69 / EPEC), this protein is FMN reductase (NADH) RutF.